The primary structure comprises 466 residues: Exodeoxyribonuclease 7 large subunit (466 aa).

This sequence belongs to the XseA family. In terms of assembly, heterooligomer composed of large and small subunits.

It is found in the cytoplasm. The catalysed reaction is Exonucleolytic cleavage in either 5'- to 3'- or 3'- to 5'-direction to yield nucleoside 5'-phosphates.. Its function is as follows. Bidirectionally degrades single-stranded DNA into large acid-insoluble oligonucleotides, which are then degraded further into small acid-soluble oligonucleotides. The chain is Exodeoxyribonuclease 7 large subunit from Ruthia magnifica subsp. Calyptogena magnifica.